Here is a 232-residue protein sequence, read N- to C-terminus: Chaperone protein CssC (232 aa).

A signal peptide spans 1-20; the sequence is MKSKLIILLTLVPFSSFSTG.

The protein belongs to the periplasmic pilus chaperone family.

It is found in the periplasm. Involved in the biogenesis of the CS6 fimbria. The polypeptide is Chaperone protein CssC (cssC) (Escherichia coli).